We begin with the raw amino-acid sequence, 209 residues long: Probable GTP-binding protein EngB (209 aa).

Positions 22–198 constitute an EngB-type G domain; sequence TPLEIAFVGR…NRTVGSWFDA (177 aa). Mg(2+)-binding residues include Ser-37 and Thr-59.

Belongs to the TRAFAC class TrmE-Era-EngA-EngB-Septin-like GTPase superfamily. EngB GTPase family. The cofactor is Mg(2+).

Functionally, necessary for normal cell division and for the maintenance of normal septation. This is Probable GTP-binding protein EngB from Neisseria gonorrhoeae.